Reading from the N-terminus, the 302-residue chain is Tegument protein VP22 (302 aa).

Over residues 1–10 (MASSDGDRLC) the composition is skewed to basic and acidic residues. Disordered regions lie at residues 1 to 42 (MASS…PDDS) and 125 to 170 (SFTK…SSWC). The segment at 154–244 (RPISFSTAPK…ANEADLGEGA (91 aa)) is interaction with gE. A compositionally biased stretch (polar residues) spans 157-170 (SFSTAPKTATSSWC). The Nuclear export signal motif lies at 212–224 (LDRLLTGAVIRIT). Residues 243–302 (GASVSKRGHNRKTGDLQGGMGNEPMYAQVRKPKSRTDTQTTGRITNRSRARSASRTDTRK) are disordered.

Belongs to the alphaherpesvirinae VP22 tegument protein family. Interacts with gE (via C-terminus); this interaction is necessary for the recruitment of VP22/ORF9 to the Golgi and its packaging into virions. Interacts with gM (via C-terminus). Interacts with VP16/ORF10; this interaction allows the formation of a tripartite complex composed of VP16/ORF10, VP22/ORF9 and VHS/ORF17. Interacts with the capsid-binding protein ORF44. Interacts with host CGAS. Highly phosphorylated in the host cell. Packaging is selective for underphosphorylated forms.

The protein localises to the virion tegument. It localises to the host cytoplasm. It is found in the host nucleus. The protein resides in the host Golgi apparatus. Tegument protein that plays different roles during the time course of infection. Participates in both the accumulation of viral mRNAs and viral protein translation at late time of infection. Modulates the RNase activity of the virion host shutoff protein ORF17 probably to ensure necessary levels of key cellular mRNAs and proteins. Plays a role in microtubule reorganization that occurs after viral infection by stabilizing microtubule network. Plays a role in the inhibition of host innate immune system by targeting the CGAS enzymatic activity which is the principal cytosolic DNA sensor that detects invading viral DNA. Acts by mediating disruption of liquid-like droplets in which CGAS is activated, thereby preventing CGAS activity. The polypeptide is Tegument protein VP22 (Homo sapiens (Human)).